The primary structure comprises 177 residues: Ubiquinol-cytochrome c reductase iron-sulfur subunit (177 aa).

Residues 18 to 38 form a helical membrane-spanning segment; that stretch reads MVLTASSVAAVGAVCTLWPLV. The Rieske domain occupies 88–175; that stretch reads ARAVKMSELI…YTFISDKKIR (88 aa). 4 residues coordinate [2Fe-2S] cluster: cysteine 120, histidine 122, cysteine 139, and histidine 142. Cysteine 125 and cysteine 141 are oxidised to a cystine.

Belongs to the Rieske iron-sulfur protein family. In terms of assembly, the main subunits of complex b-c1 are: cytochrome b, cytochrome c1 and the Rieske protein. [2Fe-2S] cluster serves as cofactor.

The protein localises to the cell membrane. The enzyme catalyses a quinol + 2 Fe(III)-[cytochrome c](out) = a quinone + 2 Fe(II)-[cytochrome c](out) + 2 H(+)(out). Component of the ubiquinol-cytochrome c reductase complex (complex III or cytochrome b-c1 complex), which is a respiratory chain that generates an electrochemical potential coupled to ATP synthesis. This is Ubiquinol-cytochrome c reductase iron-sulfur subunit (petA) from Rickettsia felis (strain ATCC VR-1525 / URRWXCal2) (Rickettsia azadi).